Consider the following 496-residue polypeptide: tRNA-2-methylthio-N(6)-dimethylallyladenosine synthase (496 aa).

Residues 43–160 (KKVFVTTQGC…LPELYDQSHQ (118 aa)) enclose the MTTase N-terminal domain. Residues cysteine 52, cysteine 89, cysteine 123, cysteine 204, cysteine 208, and cysteine 211 each coordinate [4Fe-4S] cluster. The Radical SAM core domain maps to 190–422 (RVEGFKAFVS…QKVIIDSTLA (233 aa)). One can recognise a TRAM domain in the interval 425 to 493 (HEMVGTTTRV…PHMVKGEIEA (69 aa)).

The protein belongs to the methylthiotransferase family. MiaB subfamily. Monomer. The cofactor is [4Fe-4S] cluster.

It localises to the cytoplasm. It catalyses the reaction N(6)-dimethylallyladenosine(37) in tRNA + (sulfur carrier)-SH + AH2 + 2 S-adenosyl-L-methionine = 2-methylsulfanyl-N(6)-dimethylallyladenosine(37) in tRNA + (sulfur carrier)-H + 5'-deoxyadenosine + L-methionine + A + S-adenosyl-L-homocysteine + 2 H(+). Catalyzes the methylthiolation of N6-(dimethylallyl)adenosine (i(6)A), leading to the formation of 2-methylthio-N6-(dimethylallyl)adenosine (ms(2)i(6)A) at position 37 in tRNAs that read codons beginning with uridine. The protein is tRNA-2-methylthio-N(6)-dimethylallyladenosine synthase of Psychrobacter arcticus (strain DSM 17307 / VKM B-2377 / 273-4).